The primary structure comprises 264 residues: Type III pantothenate kinase (264 aa).

6–13 (DSGNSRLK) contacts ATP. Substrate contacts are provided by residues Tyr-92 and 99–102 (GADR). The active-site Proton acceptor is the Asp-101. Position 127 (Thr-127) interacts with ATP. Position 177 (Thr-177) interacts with substrate.

The protein belongs to the type III pantothenate kinase family. Homodimer. NH4(+) serves as cofactor. It depends on K(+) as a cofactor.

It localises to the cytoplasm. The enzyme catalyses (R)-pantothenate + ATP = (R)-4'-phosphopantothenate + ADP + H(+). It functions in the pathway cofactor biosynthesis; coenzyme A biosynthesis; CoA from (R)-pantothenate: step 1/5. Functionally, catalyzes the phosphorylation of pantothenate (Pan), the first step in CoA biosynthesis. The polypeptide is Type III pantothenate kinase (Bordetella petrii (strain ATCC BAA-461 / DSM 12804 / CCUG 43448)).